We begin with the raw amino-acid sequence, 647 residues long: Solute carrier family 23 member 2 (647 aa).

Residues 1-11 show a composition bias toward polar residues; the sequence is MMGVGKNTSKS. Residues 1–26 form a disordered region; the sequence is MMGVGKNTSKSVEVGGSTEGKYEEEA. Residues 8–109 lie on the Cytoplasmic side of the membrane; that stretch reads TSKSVEVGGS…LCIFLGLQHY (102 aa). S69 carries the phosphoserine modification. A Phosphothreonine modification is found at T74. The residue at position 77 (S77) is a Phosphoserine. A Phosphothreonine modification is found at T78. The residue at position 80 (S80) is a Phosphoserine. The chain crosses the membrane as a helical span at residues 110 to 130; sequence LTCFSGTIAVPFLLADAMCVG. Residues 131 to 138 are Extracellular-facing; it reads DDQWATSQ. A helical transmembrane segment spans residues 139–159; sequence LIGTIFFCVGITTLLQTTFGC. R160 is a topological domain (cytoplasmic). Residues 161–181 traverse the membrane as a helical segment; the sequence is LPLFQASAFAFLAPARAILSL. The Extracellular segment spans residues 182–215; that stretch reads DKWKCNTTEITVANGTAELLEHIWHPRIQEIQGA. N-linked (GlcNAc...) asparagine glycans are attached at residues N187 and N195. A helical membrane pass occupies residues 216-236; it reads IIMSSLIEVVIGLLGLPGALL. At 237 to 263 the chain is on the cytoplasmic side; the sequence is RYIGPLTITPTVALIGLSGFQAAGERA. A helical transmembrane segment spans residues 264 to 281; sequence GKHWGIAMLTIFLVLLFS. Topologically, residues 282–285 are extracellular; sequence QYAR. Residues 286-299 constitute an intramembrane region (helical); sequence NVKFPLPIYKSKKG. Residues 300-306 are Extracellular-facing; the sequence is WTAYKLQ. The chain crosses the membrane as a helical span at residues 307 to 327; the sequence is LFKMFPIILAILVSWLLCFIF. The Cytoplasmic portion of the chain corresponds to 328–368; the sequence is TVTDVFPSNSTDYGYYARTDARKGVLLVAPWFKVPYPFQWG. A helical transmembrane segment spans residues 369 to 389; the sequence is MPTVSAAGVIGMLSAVVASII. The Extracellular portion of the chain corresponds to 390 to 414; that stretch reads ESIGDYYACARLSCAPPPPIHAINR. A helical transmembrane segment spans residues 415–435; that stretch reads GIFVEGLSCVLDGVFGTGNGS. Over 436–458 the chain is Cytoplasmic; the sequence is TSSSPNIGVLGITKVGSRRVIQY. The chain crosses the membrane as a helical span at residues 459–479; that stretch reads GAALMLGLGMIGKFSALFASL. Over 480-482 the chain is Extracellular; the sequence is PDP. A helical membrane pass occupies residues 483–503; the sequence is VLGALFCTLFGMITAVGLSNL. The Cytoplasmic portion of the chain corresponds to 504–513; it reads QFIDLNSSRN. The helical transmembrane segment at 514–534 threads the bilayer; that stretch reads LFVLGFSIFFGLVLPSYLRQN. Topologically, residues 535 to 544 are extracellular; sequence PLVTGITGID. The helical transmembrane segment at 545-565 threads the bilayer; that stretch reads QVLNVLLTTAMFVGGCVAFIL. At 566 to 647 the chain is on the cytoplasmic side; it reads DNTIPGTPEE…SSDKDSQATV (82 aa). Phosphothreonine is present on T646.

The protein belongs to the nucleobase:cation symporter-2 (NCS2) (TC 2.A.40) family. In terms of assembly, interacts with CLSTN3. In terms of processing, phosphorylated. Highly expressed in neural, neuroendocrine, exocrine and endothelial tissues and in osteoblasts. Detected in neurons throughout the central nervous system, in meninges and choroid plexus, in the anterior pituitary, the intermediate lobe, in pancreas, adrenal cortex, gastric glands, and in the inner nuclear layer of the retina.

Its subcellular location is the cell membrane. It carries out the reaction L-ascorbate(out) + 2 Na(+)(out) = L-ascorbate(in) + 2 Na(+)(in). Functionally, sodium/ascorbate cotransporter. Mediates electrogenic uptake of vitamin C, with a stoichiometry of 2 Na(+) for each ascorbate. This chain is Solute carrier family 23 member 2 (Slc23a2), found in Rattus norvegicus (Rat).